The primary structure comprises 309 residues: Ornithine carbamoyltransferase (309 aa).

Carbamoyl phosphate is bound by residues 56–59, glutamine 83, arginine 107, and 134–137; these read STRT and HPCQ. L-ornithine contacts are provided by residues asparagine 165, aspartate 223, and 227-228; that span reads SM. Carbamoyl phosphate-binding positions include 263 to 264 and arginine 291; that span reads CL.

It belongs to the aspartate/ornithine carbamoyltransferase superfamily. OTCase family.

It is found in the cytoplasm. It catalyses the reaction carbamoyl phosphate + L-ornithine = L-citrulline + phosphate + H(+). Its pathway is amino-acid biosynthesis; L-arginine biosynthesis; L-arginine from L-ornithine and carbamoyl phosphate: step 1/3. Reversibly catalyzes the transfer of the carbamoyl group from carbamoyl phosphate (CP) to the N(epsilon) atom of ornithine (ORN) to produce L-citrulline. The chain is Ornithine carbamoyltransferase from Burkholderia cenocepacia (strain HI2424).